Consider the following 212-residue polypeptide: Fe/S biogenesis protein NfuA (212 aa).

[4Fe-4S] cluster is bound by residues cysteine 169 and cysteine 172.

Belongs to the NfuA family. In terms of assembly, homodimer. [4Fe-4S] cluster serves as cofactor.

Involved in iron-sulfur cluster biogenesis. Binds a 4Fe-4S cluster, can transfer this cluster to apoproteins, and thereby intervenes in the maturation of Fe/S proteins. Could also act as a scaffold/chaperone for damaged Fe/S proteins. This is Fe/S biogenesis protein NfuA from Acinetobacter baylyi (strain ATCC 33305 / BD413 / ADP1).